Here is a 237-residue protein sequence, read N- to C-terminus: Uridylate kinase (237 aa).

12–15 (KISG) is an ATP binding site. Gly54 is a binding site for UMP. Positions 55 and 59 each coordinate ATP. UMP-binding positions include Asp72 and 133-140 (TGNPFFST). Residues Tyr166 and Asp169 each coordinate ATP.

This sequence belongs to the UMP kinase family. As to quaternary structure, homohexamer.

It localises to the cytoplasm. The enzyme catalyses UMP + ATP = UDP + ADP. Its pathway is pyrimidine metabolism; CTP biosynthesis via de novo pathway; UDP from UMP (UMPK route): step 1/1. Inhibited by UTP. Its function is as follows. Catalyzes the reversible phosphorylation of UMP to UDP. The protein is Uridylate kinase of Caldanaerobacter subterraneus subsp. tengcongensis (strain DSM 15242 / JCM 11007 / NBRC 100824 / MB4) (Thermoanaerobacter tengcongensis).